Consider the following 307-residue polypeptide: 1-phosphofructokinase (307 aa).

ATP is bound by residues serine 217–glycine 222 and glycine 249–aspartate 250. The active-site Proton acceptor is aspartate 250.

Belongs to the carbohydrate kinase PfkB family.

The catalysed reaction is beta-D-fructose 1-phosphate + ATP = beta-D-fructose 1,6-bisphosphate + ADP + H(+). Its function is as follows. Catalyzes the ATP-dependent phosphorylation of fructose-l-phosphate to fructose-l,6-bisphosphate. The protein is 1-phosphofructokinase (fruK) of Borreliella burgdorferi (strain ATCC 35210 / DSM 4680 / CIP 102532 / B31) (Borrelia burgdorferi).